Reading from the N-terminus, the 1235-residue chain is ATP-dependent helicase/nuclease subunit A (1235 aa).

The UvrD-like helicase ATP-binding domain maps to 12–482; that stretch reads SLWTDDQWKA…IDLSQNFRSR (471 aa). ATP is bound at residue 33 to 40; it reads AAAGSGKT. Positions 509-800 constitute a UvrD-like helicase C-terminal domain; the sequence is AAELTLGAKS…RMMTIHASKG (292 aa).

The protein belongs to the helicase family. AddA subfamily. As to quaternary structure, heterodimer of AddA and AddB/RexB. It depends on Mg(2+) as a cofactor.

The enzyme catalyses Couples ATP hydrolysis with the unwinding of duplex DNA by translocating in the 3'-5' direction.. It catalyses the reaction ATP + H2O = ADP + phosphate + H(+). Functionally, the heterodimer acts as both an ATP-dependent DNA helicase and an ATP-dependent, dual-direction single-stranded exonuclease. Recognizes the chi site generating a DNA molecule suitable for the initiation of homologous recombination. The AddA nuclease domain is required for chi fragment generation; this subunit has the helicase and 3' -&gt; 5' nuclease activities. This is ATP-dependent helicase/nuclease subunit A from Listeria monocytogenes serotype 4a (strain HCC23).